Here is a 149-residue protein sequence, read N- to C-terminus: UPF0178 protein VV1_1847 (149 aa).

It belongs to the UPF0178 family.

The polypeptide is UPF0178 protein VV1_1847 (Vibrio vulnificus (strain CMCP6)).